The sequence spans 147 residues: Large ribosomal subunit protein bL9 (147 aa).

It belongs to the bacterial ribosomal protein bL9 family.

Its function is as follows. Binds to the 23S rRNA. This Clostridium novyi (strain NT) protein is Large ribosomal subunit protein bL9.